A 118-amino-acid polypeptide reads, in one-letter code: Small ribosomal subunit protein uS13 (118 aa).

The interval H91 to K118 is disordered.

This sequence belongs to the universal ribosomal protein uS13 family. As to quaternary structure, part of the 30S ribosomal subunit. Forms a loose heterodimer with protein S19. Forms two bridges to the 50S subunit in the 70S ribosome.

Functionally, located at the top of the head of the 30S subunit, it contacts several helices of the 16S rRNA. In the 70S ribosome it contacts the 23S rRNA (bridge B1a) and protein L5 of the 50S subunit (bridge B1b), connecting the 2 subunits; these bridges are implicated in subunit movement. Contacts the tRNAs in the A and P-sites. This chain is Small ribosomal subunit protein uS13, found in Sodalis glossinidius (strain morsitans).